Consider the following 606-residue polypeptide: Mitogen-activated protein kinase kinase kinase 7 (606 aa).

Residues 1–300 are interaction with MAPK8IP1; the sequence is MSTASAASSS…FPGADEPLQY (300 aa). Residues 36 to 291 enclose the Protein kinase domain; it reads IEVEEVVGRG…KIMTHLMRYF (256 aa). ATP-binding positions include 42-50 and K63; that span reads VGRGAFGVV. K72 participates in a covalent cross-link: Glycyl lysine isopeptide (Lys-Gly) (interchain with G-Cter in ubiquitin). D156 (proton acceptor) is an active-site residue. A Glycyl lysine isopeptide (Lys-Gly) (interchain with G-Cter in ubiquitin) cross-link involves residue K158. Phosphothreonine; by autocatalysis is present on residues T184 and T187. S192 bears the Phosphoserine; by autocatalysis mark. A Glycyl lysine isopeptide (Lys-Gly) (interchain with G-Cter in ubiquitin) cross-link involves residue K209. 2 disordered regions span residues 301 to 338 and 354 to 391; these read PCQY…MEQV and KNQA…MSAD. Over residues 306–338 the composition is skewed to polar residues; that stretch reads DEGQSNSATSTGSFMDIASTNTSNKSDTNMEQV. The span at 361-375 shows a compositional bias: low complexity; it reads SDSGRLSLGASRGSS. Residues S367, S389, and S439 each carry the phosphoserine modification. The span at 443-452 shows a compositional bias: polar residues; sequence LTVTGTEPGQ. The disordered stretch occupies residues 443-492; the sequence is LTVTGTEPGQVSSRSSSPSVRMITTSGPTSEKPARSLPWTPDDSTDTNGS. The span at 453–463 shows a compositional bias: low complexity; it reads VSSRSSSPSVR. Residue S455 is modified to Phosphoserine.

The protein belongs to the protein kinase superfamily. STE Ser/Thr protein kinase family. MAP kinase kinase kinase subfamily. In terms of assembly, can form homodimer. Binds both upstream activators and downstream substrates in multimolecular complexes. Interacts with TAB1/MAP3K7IP1, TAB2/MAP3K7IP2 and TAB3/MAP3K7IP3. Identified in the TRIKA2 complex composed of MAP3K7/TAK1, TAB1/MAP3K7IP1 and TAB2/MAP3K7IP2. Interacts with PPM1L and PPM1B/PP2CB. Interaction with PP2A and PPP6C leads to its repressed activity. Interacts with TRAF6 and TAB1/MAP3K7IP1; during IL-1 signaling. Interacts with TAOK1 and TAOK2; interaction with TAOK2 interferes with MAP3K7 interaction with IKKA, thus preventing NF-kappa-B activation. Interacts with DYNC2I2 (via WD domains). Interacts with CYLD and RBCK1. Interacts with TGFBR1; induces MAP3K7/TAK1 activation by TRAF6. Interacts with MAPK8IP1 and SMAD6. Interacts with isoform 1 of VRK2. Interacts with DAB2; the interaction is induced by TGF-beta stimulation and may mediate TGF-beta stimulated JNK activation. Interacts with TRIM5. Part of a complex containing ITCH, NDFIP1 and MAP3K7. Interacts with PLEKHM1 (via N- and C-terminus). Found in a complex with SH3RF1, RAC2, MAP2K7/MKK7, MAPK8IP1/JIP1, MAPK8/JNK1 and MAPK9/JNK2. Interacts with SASH1. Interacts with RIPK1. The cofactor is Mg(2+). Association with TAB1/MAP3K7IP1 promotes autophosphorylation at Ser-192 and subsequent activation. Association with TAB2/MAP3K7IP2, itself associated with free unanchored Lys-63 polyubiquitin chain, promotes autophosphorylation and subsequent activation of MAP3K7. Dephosphorylation at Ser-192 by PPM1B/PP2CB and at Thr-187 by PP2A and PPP6C leads to inactivation. Deubiquitinated by USP19; leading to negative regulation of TNF-alpha- and IL-1beta-triggered NF-kappa-B activation. Post-translationally, 'Lys-48'-linked polyubiquitination at Lys-72 is induced by TNFalpha, and leads to proteasomal degradation. Undergoes 'Lys-48'-linked polyubiquitination catalyzed by ITCH. 'Lys-63'-linked polyubiquitination at Lys-158 by TRIM8 does not lead to proteasomal degradation but contributes to autophosphorylation and activation. Deubiquitinated by CYLD, a protease that selectively cleaves 'Lys-63'-linked ubiquitin chains.

The protein localises to the cytoplasm. It localises to the cell membrane. The catalysed reaction is L-seryl-[protein] + ATP = O-phospho-L-seryl-[protein] + ADP + H(+). The enzyme catalyses L-threonyl-[protein] + ATP = O-phospho-L-threonyl-[protein] + ADP + H(+). Its activity is regulated as follows. Activated by pro-inflammatory cytokines and in response to physical and chemical stresses, including osmotic stress, oxidative stress, arsenic and ultraviolet light irradiation. Activated by 'Lys-63'-linked polyubiquitination and by autophosphorylation. Association with TAB1/MAP3K7IP1 and TAB2/MAP3K7IP2 promotes activation through autophosphorylation, whereas PPM1B/PP2CB, PP2A and PPP6C dephosphorylation leads to inactivation. Ceramides are also able to activate MAP3K7/TAK1. Serine/threonine kinase which acts as an essential component of the MAP kinase signal transduction pathway. Plays an important role in the cascades of cellular responses evoked by changes in the environment. Mediates signal transduction of TRAF6, various cytokines including interleukin-1 (IL-1), transforming growth factor-beta (TGFB), TGFB-related factors like BMP2 and BMP4, toll-like receptors (TLR), tumor necrosis factor receptor CD40 and B-cell receptor (BCR). Once activated, acts as an upstream activator of the MKK/JNK signal transduction cascade and the p38 MAPK signal transduction cascade through the phosphorylation and activation of several MAP kinase kinases like MAP2K1/MEK1, MAP2K3/MKK3, MAP2K6/MKK6 and MAP2K7/MKK7. These MAP2Ks in turn activate p38 MAPKs and c-jun N-terminal kinases (JNKs); both p38 MAPK and JNK pathways control the transcription factors activator protein-1 (AP-1). Independently of MAP2Ks and p38 MAPKs, acts as a key activator of NF-kappa-B by promoting activation of the I-kappa-B-kinase (IKK) core complex. Mechanistically, recruited to polyubiquitin chains of RIPK2 and IKBKG/NEMO via TAB2/MAP3K7IP2 and TAB3/MAP3K7IP3, and catalyzes phosphorylation and activation of IKBKB/IKKB component of the IKK complex, leading to NF-kappa-B activation. In osmotic stress signaling, plays a major role in the activation of MAPK8/JNK1, but not that of NF-kappa-B. Promotes TRIM5 capsid-specific restriction activity. Phosphorylates RIPK1 at 'Ser-321' which positively regulates RIPK1 interaction with RIPK3 to promote necroptosis but negatively regulates RIPK1 kinase activity and its interaction with FADD to mediate apoptosis. Phosphorylates STING1 in response to cGAMP-activation, promoting association between STEEP1 and STING1 and STING1 translocation to COPII vesicles. This Rattus norvegicus (Rat) protein is Mitogen-activated protein kinase kinase kinase 7 (Map3k7).